The chain runs to 354 residues: 3-isopropylmalate dehydrogenase (354 aa).

74-87 (GPKWDDLPPEKRPE) lines the NAD(+) pocket. R95, R105, R134, and D219 together coordinate substrate. The Mg(2+) site is built by D219, D243, and D247. 275–287 (GSAPDIAGKNIAN) contributes to the NAD(+) binding site.

It belongs to the isocitrate and isopropylmalate dehydrogenases family. LeuB type 1 subfamily. Homodimer. It depends on Mg(2+) as a cofactor. Mn(2+) serves as cofactor.

The protein localises to the cytoplasm. It catalyses the reaction (2R,3S)-3-isopropylmalate + NAD(+) = 4-methyl-2-oxopentanoate + CO2 + NADH. Its pathway is amino-acid biosynthesis; L-leucine biosynthesis; L-leucine from 3-methyl-2-oxobutanoate: step 3/4. Functionally, catalyzes the oxidation of 3-carboxy-2-hydroxy-4-methylpentanoate (3-isopropylmalate) to 3-carboxy-4-methyl-2-oxopentanoate. The product decarboxylates to 4-methyl-2 oxopentanoate. The sequence is that of 3-isopropylmalate dehydrogenase (leuB) from Thermotoga maritima (strain ATCC 43589 / DSM 3109 / JCM 10099 / NBRC 100826 / MSB8).